We begin with the raw amino-acid sequence, 244 residues long: 7-cyano-7-deazaguanine synthase (244 aa).

17–27 lines the ATP pocket; it reads FSGGQDSTTCL. 4 residues coordinate Zn(2+): Cys205, Cys220, Cys223, and Cys226.

This sequence belongs to the QueC family. Requires Zn(2+) as cofactor.

It catalyses the reaction 7-carboxy-7-deazaguanine + NH4(+) + ATP = 7-cyano-7-deazaguanine + ADP + phosphate + H2O + H(+). Its pathway is purine metabolism; 7-cyano-7-deazaguanine biosynthesis. Its function is as follows. Catalyzes the ATP-dependent conversion of 7-carboxy-7-deazaguanine (CDG) to 7-cyano-7-deazaguanine (preQ(0)). This is 7-cyano-7-deazaguanine synthase from Bordetella pertussis (strain Tohama I / ATCC BAA-589 / NCTC 13251).